The sequence spans 318 residues: Formimidoylglutamase (318 aa).

His130, Asp155, His157, Asp159, Asp246, and Asp248 together coordinate Mn(2+).

Belongs to the arginase family. Mn(2+) is required as a cofactor.

It carries out the reaction N-formimidoyl-L-glutamate + H2O = formamide + L-glutamate. Its pathway is amino-acid degradation; L-histidine degradation into L-glutamate; L-glutamate from N-formimidoyl-L-glutamate (hydrolase route): step 1/1. Its function is as follows. Catalyzes the conversion of N-formimidoyl-L-glutamate to L-glutamate and formamide. The protein is Formimidoylglutamase of Photorhabdus laumondii subsp. laumondii (strain DSM 15139 / CIP 105565 / TT01) (Photorhabdus luminescens subsp. laumondii).